The chain runs to 334 residues: MDDRARALLKALIERYIADGQPVGSRTLSKVFDLSPATIRNVMADLEELGLIHSPHTSAGRVPTPRGYRMFVDSLLAVRAYQFEPAHIGELLPVSEPSRAVNAAAALLSNLTQFAGVVLTPKRTQIFRQIEFIRLSDKRVLLIIVTPEGDVQNRILSAQRDYTEAELLEAGNFFNVHFSGKSFDAVRRTLSTELAQLRDDISRLMQAAVEAGAEAADDGEAVVISGERKLLDVTDIASDMDRLRKMFSLFEKKTDLLQLLDVSSRAQGVQIYIGGDSQLVPMEEVSVITAPYGVDGKVIGTLGVIGPTRMAYERVIPIVDITARLLSNALSHNQ.

Belongs to the HrcA family.

Its function is as follows. Negative regulator of class I heat shock genes (grpE-dnaK-dnaJ and groELS operons). Prevents heat-shock induction of these operons. The chain is Heat-inducible transcription repressor HrcA from Bordetella bronchiseptica (strain ATCC BAA-588 / NCTC 13252 / RB50) (Alcaligenes bronchisepticus).